The chain runs to 71 residues: Gas vesicle protein A (71 aa).

This sequence belongs to the gas vesicle GvpA family. In terms of assembly, the gas vesicle shell is 2 nm thick and consists of a single layer of this protein. It forms helical ribs nearly perpendicular to the long axis of the vesicle.

The protein localises to the gas vesicle shell. Gas vesicles are hollow, gas filled proteinaceous nanostructures found in some microorganisms. During planktonic growth they allow positioning of the organism at a favorable depth for light or nutrient acquisition. GvpA forms the protein shell. In terms of biological role, cluster expression in E.coli (gvpA1-gvpA2-gvpC-gvpN-gvpJ-gvpK-gvpF-gvpG-gvpV-gvpW) allows cells to float and produces irregularly shaped gas vesicles. The chain is Gas vesicle protein A from Nostoc sp. (strain PCC 7120 / SAG 25.82 / UTEX 2576).